A 352-amino-acid polypeptide reads, in one-letter code: Molybdenum import ATP-binding protein ModC (352 aa).

One can recognise an ABC transporter domain in the interval 1-229 (MLELNFSQTL…SVMNPWLPKE (229 aa)). 31 to 38 (GVSGAGKT) lines the ATP pocket. The Mop domain maps to 289–352 (QTSIRNVLRA…AQIKSVSITA (64 aa)).

The protein belongs to the ABC transporter superfamily. Molybdate importer (TC 3.A.1.8) family. As to quaternary structure, the complex is composed of two ATP-binding proteins (ModC), two transmembrane proteins (ModB) and a solute-binding protein (ModA).

It is found in the cell inner membrane. It catalyses the reaction molybdate(out) + ATP + H2O = molybdate(in) + ADP + phosphate + H(+). Its function is as follows. Part of the ABC transporter complex ModABC involved in molybdenum import. Responsible for energy coupling to the transport system. This chain is Molybdenum import ATP-binding protein ModC, found in Escherichia coli O6:H1 (strain CFT073 / ATCC 700928 / UPEC).